We begin with the raw amino-acid sequence, 130 residues long: Ribonuclease P protein component 2 (130 aa).

The protein belongs to the eukaryotic/archaeal RNase P protein component 2 family. Consists of a catalytic RNA component and at least 4-5 protein subunits.

The protein localises to the cytoplasm. It carries out the reaction Endonucleolytic cleavage of RNA, removing 5'-extranucleotides from tRNA precursor.. Part of ribonuclease P, a protein complex that generates mature tRNA molecules by cleaving their 5'-ends. This Methanococcus maripaludis (strain C5 / ATCC BAA-1333) protein is Ribonuclease P protein component 2.